We begin with the raw amino-acid sequence, 213 residues long: NADH-quinone oxidoreductase subunit B 1 (213 aa).

The [4Fe-4S] cluster site is built by C82, C83, C148, and C177.

It belongs to the complex I 20 kDa subunit family. In terms of assembly, NDH-1 is composed of 14 different subunits. Subunits NuoB, C, D, E, F, and G constitute the peripheral sector of the complex. [4Fe-4S] cluster is required as a cofactor.

The protein localises to the cell inner membrane. The enzyme catalyses a quinone + NADH + 5 H(+)(in) = a quinol + NAD(+) + 4 H(+)(out). In terms of biological role, NDH-1 shuttles electrons from NADH, via FMN and iron-sulfur (Fe-S) centers, to quinones in the respiratory chain. The immediate electron acceptor for the enzyme in this species is believed to be ubiquinone. Couples the redox reaction to proton translocation (for every two electrons transferred, four hydrogen ions are translocated across the cytoplasmic membrane), and thus conserves the redox energy in a proton gradient. This Koribacter versatilis (strain Ellin345) protein is NADH-quinone oxidoreductase subunit B 1.